A 1487-amino-acid chain; its full sequence is Collagen alpha-1(II) chain (1487 aa).

Residues 1-25 (MIRLGAPQSLVLLTLLIAAVLRCQG) form the signal peptide. Residues 26-181 (QDAQEAGSCL…PGLSAGNFAA (156 aa)) constitute a propeptide, N-terminal propeptide. The VWFC domain maps to 32–89 (GSCLQNGQRYKDKDVWKPSSCRICVCDTGNVLCDDIICEDPDCLNPEIPFGECCPICP). The disordered stretch occupies residues 96–179 (SGKLGPKGQK…GPPGLSAGNF (84 aa)). Basic and acidic residues-rich tracts occupy residues 104–115 (QKGEPGDIRDII) and 132–153 (PRGD…RDGE). The segment covering 157-172 (PGNPGPAGPPGPPGPP) has biased composition (pro residues). The residue at position 190 (Lys190) is a 5-hydroxylysine. Residue Lys190 is glycosylated (O-linked (Gal...) hydroxylysine). Residues 191 to 1237 (AGGAQMGVMQ…QREKGPDPMQ (1047 aa)) are disordered. Low complexity predominate over residues 192-203 (GGAQMGVMQGPM). The interval 201 to 1214 (GPMGPMGPRG…PGPPGPPGPP (1014 aa)) is triple-helical region. Residues 208–217 (PRGPPGPAGA) are compositionally biased toward pro residues. The segment covering 218-239 (PGPQGFQGNPGEPGEPGVSGPM) has biased composition (low complexity). A compositionally biased stretch (basic and acidic residues) spans 251–265 (PGDDGEAGKPGKSGE). 3 positions are modified to 5-hydroxylysine: Lys287, Lys299, and Lys308. Residues Lys287, Lys299, and Lys308 are each glycosylated (O-linked (Gal...) hydroxylysine). 2 stretches are compositionally biased toward low complexity: residues 310–320 (ESGSPGENGSP) and 335–350 (TGPA…DGQP). Residues 360–369 (GPAGGPGFPG) are compositionally biased toward gly residues. Composition is skewed to low complexity over residues 370–382 (APGA…PTGA) and 403–431 (PAGA…AGAP). Lys374 bears the 5-hydroxylysine mark. Residue Lys374 is glycosylated (O-linked (Gal...) hydroxylysine). Pro residues predominate over residues 433 to 442 (FPGPRGPPGP). Residues 472-485 (ETGPAGPQGAPGPA) show a composition bias toward low complexity. A 5-hydroxylysine mark is found at Lys608 and Lys620. O-linked (Gal...) hydroxylysine glycosylation is found at Lys608 and Lys620. A compositionally biased stretch (low complexity) spans 622–631 (LAGAPGLRGL). Residues Pro659 and Pro668 each carry the 4-hydroxyproline modification. A 3-hydroxyproline modification is found at Pro670. Pro671 and Pro674 each carry 4-hydroxyproline. Positions 706–736 (ERGSPGAQGLQGPRGLPGTPGTDGPKGAAGP) are enriched in low complexity. The segment covering 764–775 (KGDRGDVGEKGP) has biased composition (basic and acidic residues). Low complexity-rich tracts occupy residues 833 to 848 (AGFA…PGAK) and 877 to 914 (PTGV…NGNP). Pro907 bears the 3-hydroxyproline mark. 3 positions are modified to 4-hydroxyproline: Pro908, Pro914, and Pro920. Residues 962 to 980 (DGPSGLDGPPGPQGLAGQR) are compositionally biased toward low complexity. Positions 1069–1079 (APGPPGSPGPA) are enriched in pro residues. A compositionally biased stretch (basic and acidic residues) spans 1115 to 1129 (RGDKGESGEQGERGL). Pro1144 carries the post-translational modification 3-hydroxyproline. Composition is skewed to low complexity over residues 1148 to 1157 (SGDQGASGPA) and 1171 to 1181 (PSGKDGSNGIP). Pro1181 bears the 4-hydroxyproline mark. At Pro1186 the chain carries 3-hydroxyproline. 4-hydroxyproline is present on Pro1187. Over residues 1199–1216 (VGPPGSPGPPGPPGPPGP) the composition is skewed to pro residues. Pro1201 bears the 3-hydroxyproline mark. A 4-hydroxyproline mark is found at Pro1202 and Pro1205. Residue Pro1207 is modified to 3-hydroxyproline. Pro1208 and Pro1211 each carry 4-hydroxyproline. Position 1213 is a 3-hydroxyproline (Pro1213). The residue at position 1214 (Pro1214) is a 4-hydroxyproline. Positions 1215–1241 (GPGIDMSAFAGLGQREKGPDPMQYMRA) are nonhelical region (C-terminal). Residues 1253–1487 (VEVDATLKSL…GVDIGPVCFL (235 aa)) form the Fibrillar collagen NC1 domain. 3 disulfide bridges follow: Cys1283/Cys1315, Cys1323/Cys1485, and Cys1393/Cys1438. Ca(2+) contacts are provided by Asp1301, Asn1303, Gln1304, Cys1306, and Asp1309.

This sequence belongs to the fibrillar collagen family. As to quaternary structure, homotrimers of alpha 1(II) chains. Post-translationally, contains mostly 4-hydroxyproline. Prolines at the third position of the tripeptide repeating unit (G-X-P) are 4-hydroxylated in some or all of the chains. In terms of processing, contains 3-hydroxyproline at a few sites. This modification occurs on the first proline residue in the sequence motif Gly-Pro-Hyp, where Hyp is 4-hydroxyproline. Lysine residues at the third position of the tripeptide repeating unit (G-X-Y) are 5-hydroxylated in some or all of the chains. Post-translationally, O-glycosylated on hydroxylated lysine residues. The O-linked glycan consists of a Glc-Gal disaccharide.

The protein localises to the secreted. It localises to the extracellular space. The protein resides in the extracellular matrix. Type II collagen is specific for cartilaginous tissues. It is essential for the normal embryonic development of the skeleton, for linear growth and for the ability of cartilage to resist compressive forces. The polypeptide is Collagen alpha-1(II) chain (Mus musculus (Mouse)).